The following is a 631-amino-acid chain: Putative meiotic phospholipase SPO1 (631 aa).

The first 17 residues, 1–17 (MQKLLFVFSVLLTVVLA), serve as a signal peptide directing secretion. The required for lipid-binding and function in meiosis stretch occupies residues 24–67 (QCPSSPLIREAKHELCPEETLYLKKKKIKTKNKLIQFLKSLTEA). A PLA2c domain is found at 24 to 631 (QCPSSPLIRE…LQCFKDYCYS (608 aa)). N-linked (GlcNAc...) asparagine glycosylation is found at Asn233, Asn293, and Asn303. Residues 376-396 (FITATSSSIFNNVLIFIWNLA) traverse the membrane as a helical segment. 5 N-linked (GlcNAc...) asparagine glycosylation sites follow: Asn500, Asn536, Asn560, Asn563, and Asn572.

It belongs to the lysophospholipase family. As to quaternary structure, interacts with SPO23. In terms of processing, glycosylated.

The protein resides in the endoplasmic reticulum membrane. It is found in the nucleus membrane. Regulates spindle pole duplication in meiosis I, but not in mitosis. Required for meiosis I, meiosis II chromosome segregation and spore formation. Binds phosphatidylinositol (4)P mono- and polyphosphates. The protein is Putative meiotic phospholipase SPO1 (SPO1) of Saccharomyces cerevisiae (strain ATCC 204508 / S288c) (Baker's yeast).